Consider the following 149-residue polypeptide: Ribonuclease H (149 aa).

Positions 1–141 constitute an RNase H type-1 domain; the sequence is MKTVTLFSDG…CDTMAREKAT (141 aa). Positions 9, 47, 69, and 133 each coordinate Mg(2+).

This sequence belongs to the RNase H family. In terms of assembly, monomer. Requires Mg(2+) as cofactor.

The protein localises to the cytoplasm. The catalysed reaction is Endonucleolytic cleavage to 5'-phosphomonoester.. Its function is as follows. Endonuclease that specifically degrades the RNA of RNA-DNA hybrids. The chain is Ribonuclease H from Campylobacter curvus (strain 525.92).